The primary structure comprises 276 residues: Shikimate dehydrogenase (NADP(+)) (276 aa).

Residues 15 to 17 and T62 each bind shikimate; that span reads SKS. The active-site Proton acceptor is the K66. An NADP(+)-binding site is contributed by E78. Shikimate-binding residues include N87 and D103. Residues 128–132 and I217 contribute to the NADP(+) site; that span reads GAGGA. Y219 contacts shikimate. Position 240 (G240) interacts with NADP(+).

It belongs to the shikimate dehydrogenase family. As to quaternary structure, homodimer.

The enzyme catalyses shikimate + NADP(+) = 3-dehydroshikimate + NADPH + H(+). It participates in metabolic intermediate biosynthesis; chorismate biosynthesis; chorismate from D-erythrose 4-phosphate and phosphoenolpyruvate: step 4/7. Functionally, involved in the biosynthesis of the chorismate, which leads to the biosynthesis of aromatic amino acids. Catalyzes the reversible NADPH linked reduction of 3-dehydroshikimate (DHSA) to yield shikimate (SA). The sequence is that of Shikimate dehydrogenase (NADP(+)) from Lysinibacillus sphaericus (strain C3-41).